The following is a 143-amino-acid chain: uncharacterized protein (143 aa).

The span at 1–14 shows a compositional bias: basic and acidic residues; that stretch reads MPAAKKQIEEKPEV. The segment at 1–25 is disordered; it reads MPAAKKQIEEKPEVEQDLGAPDFSD.

This is an uncharacterized protein from Pseudoalteromonas phage PM2 (Bacteriophage PM2).